A 513-amino-acid chain; its full sequence is Alanine--glyoxylate aminotransferase 2, mitochondrial (513 aa).

A mitochondrion-targeting transit peptide spans 1 to 40 (MSLAWRNLQKPFYLETSLRILQMRPSLSLGASRIAVPKLT). At lysine 56 the chain carries N6-acetyllysine. Position 70 is an N6-acetyllysine; alternate (lysine 70). N6-succinyllysine; alternate is present on lysine 70. At lysine 83 the chain carries N6-acetyllysine. Position 261 is an N6-acetyllysine; alternate (lysine 261). N6-succinyllysine; alternate is present on lysine 261. An N6-succinyllysine modification is found at lysine 303. Position 349 is an N6-(pyridoxal phosphate)lysine (lysine 349). An N6-acetyllysine; alternate mark is found at lysine 416 and lysine 419. An N6-succinyllysine; alternate mark is found at lysine 416 and lysine 419. Residue lysine 453 is modified to N6-acetyllysine.

Belongs to the class-III pyridoxal-phosphate-dependent aminotransferase family. In terms of assembly, homotetramer. Pyridoxal 5'-phosphate serves as cofactor. In terms of tissue distribution, expressed in the liver and kidney.

It localises to the mitochondrion. The enzyme catalyses glyoxylate + L-alanine = glycine + pyruvate. It carries out the reaction (R)-3-amino-2-methylpropanoate + pyruvate = 2-methyl-3-oxopropanoate + L-alanine. It catalyses the reaction 3-oxopropanoate + L-alanine = beta-alanine + pyruvate. The catalysed reaction is 2-oxobutanoate + L-alanine = (2S)-2-aminobutanoate + pyruvate. The enzyme catalyses N(omega),N(omega)-dimethyl-L-arginine + pyruvate = 5-(3,3-dimethylguanidino)-2-oxopentanoate + L-alanine. It carries out the reaction N(omega),N('omega)-dimethyl-L-arginine + pyruvate = 5-(3,3'-dimethylguanidino)-2-oxopentanoate + L-alanine. It catalyses the reaction N(omega),N(omega)-dimethyl-L-arginine + glyoxylate = 5-(3,3-dimethylguanidino)-2-oxopentanoate + glycine. The catalysed reaction is N(omega),N('omega)-dimethyl-L-arginine + glyoxylate = 5-(3,3'-dimethylguanidino)-2-oxopentanoate + glycine. The enzyme catalyses N(omega)-methyl-L-arginine + pyruvate = 5-(3-methylguanidino)-2-oxopentanoate + L-alanine. It carries out the reaction N(omega)-methyl-L-arginine + glyoxylate = 5-(3-methylguanidino)-2-oxopentanoate + glycine. It catalyses the reaction L-ornithine + pyruvate = 5-amino-2-oxopentanoate + L-alanine. The catalysed reaction is L-ornithine + glyoxylate = 5-amino-2-oxopentanoate + glycine. The enzyme catalyses (2S)-2-aminobutanoate + glyoxylate = 2-oxobutanoate + glycine. It carries out the reaction N(omega),N(omega)-dimethyl-L-arginine + oxaloacetate = 5-(3,3-dimethylguanidino)-2-oxopentanoate + L-aspartate. It catalyses the reaction oxaloacetate + L-alanine = L-aspartate + pyruvate. The catalysed reaction is N(omega),N(omega)-dimethyl-L-arginine + 2-oxobutanoate = 5-(3,3-dimethylguanidino)-2-oxopentanoate + (2S)-2-aminobutanoate. The enzyme catalyses 2-oxopentanoate + N(omega),N(omega)-dimethyl-L-arginine = 5-(3,3-dimethylguanidino)-2-oxopentanoate + L-2-aminopentanoate. It carries out the reaction 2-oxohexanoate + N(omega),N(omega)-dimethyl-L-arginine = L-2-aminohexanoate + 5-(3,3-dimethylguanidino)-2-oxopentanoate. (R)-3-amino-2-methylpropionate--pyruvate transaminase and beta-alanine-pyruvate aminotransferase are inhibited by aminooxyacetic acid. Functionally, multifunctional aminotransferase with a broad substrate specificity. Catalyzes the conversion of glyoxylate to glycine using alanine as the amino donor. Catalyzes metabolism of not L- but the D-isomer of D-beta-aminoisobutyric acid to generate 2-methyl-3-oxopropanoate and alanine. Catalyzes the transfer of the amino group from beta-alanine to pyruvate to yield L-alanine and 3-oxopropanoate. Can metabolize NG-monomethyl-L-arginine (NMMA), asymmetric NG,NG-dimethyl-L-arginine (ADMA) and symmetric NG,N'G-dimethyl-L-arginine (SDMA). ADMA is a potent inhibitor of nitric-oxide (NO) synthase, and this activity provides mechanism through which the kidney regulates blood pressure. The protein is Alanine--glyoxylate aminotransferase 2, mitochondrial (Agxt2) of Mus musculus (Mouse).